Consider the following 234-residue polypeptide: Myelin protein zero-like protein 3 (234 aa).

An N-terminal signal peptide occupies residues 1–31; it reads MQQSGVPGSRGCALCPLLGVLFFQGVYVIFS. The region spanning 32 to 148 is the Ig-like V-type domain; the sequence is LEIKADAHVR…NIPATELTVT (117 aa). Residues 32 to 158 lie on the Extracellular side of the membrane; it reads LEIKADAHVR…ERGFGTMLSS (127 aa). Cys52 and Cys128 are disulfide-bonded. N-linked (GlcNAc...) asparagine glycosylation is present at Asn123. The helical transmembrane segment at 159–179 threads the bilayer; it reads VALLSILVFIPSTVVVILLLV. Residues 180 to 234 are Cytoplasmic-facing; it reads RMGRKSAGLKKRSKSGYKKSSIEVSDDTDQEGDDCMAKLCVRCAECVDSDYEETY.

It belongs to the myelin P0 protein family.

Its subcellular location is the membrane. In terms of biological role, mediates homophilic cell-cell adhesion. The sequence is that of Myelin protein zero-like protein 3 (MPZL3) from Bos taurus (Bovine).